The chain runs to 104 residues: Large ribosomal subunit protein uL24 (104 aa).

The protein belongs to the universal ribosomal protein uL24 family. As to quaternary structure, part of the 50S ribosomal subunit.

In terms of biological role, one of two assembly initiator proteins, it binds directly to the 5'-end of the 23S rRNA, where it nucleates assembly of the 50S subunit. Its function is as follows. One of the proteins that surrounds the polypeptide exit tunnel on the outside of the subunit. The protein is Large ribosomal subunit protein uL24 of Shewanella amazonensis (strain ATCC BAA-1098 / SB2B).